Consider the following 1088-residue polypeptide: Exportin-T (1088 aa).

Over residues 435-503 (KNNNNKNKNT…VKNANNIKNN (69 aa)) the composition is skewed to low complexity. 2 disordered regions span residues 435–513 (KNNN…DDDD) and 1059–1088 (LNNNNNINNNNNNINNNGHTNGNGVNKNGH).

Belongs to the exportin family.

The protein resides in the nucleus. It localises to the cytoplasm. In terms of biological role, mediates the nuclear export of aminoacylated tRNAs. In Dictyostelium discoideum (Social amoeba), this protein is Exportin-T (xpot).